The primary structure comprises 73 residues: Toxin Td4 (73 aa).

An N-terminal signal peptide occupies residues 1-7; that stretch reads IGMVVEC. The 63-residue stretch at 8-70 folds into the LCN-type CS-alpha/beta domain; that stretch reads KDGYLVGNDG…TWDRATNRCG (63 aa). Cystine bridges form between C18–C69, C22–C44, C30–C50, and C34–C52. R71 is modified (arginine amide).

Belongs to the long (4 C-C) scorpion toxin superfamily. Sodium channel inhibitor family. Beta subfamily. In terms of tissue distribution, expressed by the venom gland.

It is found in the secreted. Its function is as follows. Beta toxins bind voltage-independently at site-4 of sodium channels (Nav) and shift the voltage of activation toward more negative potentials thereby affecting sodium channel activation and promoting spontaneous and repetitive firing. This chain is Toxin Td4, found in Tityus discrepans (Venezuelan scorpion).